Consider the following 208-residue polypeptide: Ribosome maturation factor RimP (208 aa).

This sequence belongs to the RimP family.

It localises to the cytoplasm. Required for maturation of 30S ribosomal subunits. This chain is Ribosome maturation factor RimP, found in Bartonella tribocorum (strain CIP 105476 / IBS 506).